A 301-amino-acid polypeptide reads, in one-letter code: Cytidine deaminase 1 (301 aa).

CMP/dCMP-type deaminase domains are found at residues 23–156 (SVIQ…FGPD) and 188–301 (DSSA…CYEA). Residue 64-66 (NVE) coordinates substrate. H77 provides a ligand contact to Zn(2+). The active-site Proton donor is E79. Zn(2+)-binding residues include C104 and C107.

The protein belongs to the cytidine and deoxycytidylate deaminase family. In terms of assembly, homodimer. Zn(2+) serves as cofactor. Expressed in roots, rosette leaves, stems and flowers.

The enzyme catalyses cytidine + H2O + H(+) = uridine + NH4(+). The catalysed reaction is 2'-deoxycytidine + H2O + H(+) = 2'-deoxyuridine + NH4(+). With respect to regulation, inhibited by uridine, CMP and dCMP. This enzyme scavenges exogenous and endogenous cytidine and 2'-deoxycytidine for UMP synthesis. Functions as a conventional cytidine deaminase. Has no affinity for RNA and is not involved in RNA-editing by C-to-U deamination. This Arabidopsis thaliana (Mouse-ear cress) protein is Cytidine deaminase 1 (CDA1).